The following is a 109-amino-acid chain: MTDLSLDFKKQGGLLPVIVTDFQTGQVLMLAYMNEEAYQKTLDSKEMYYWSRSRNELWHKGDTSGHYQYVKSIKTDCDQDTLLIAVEQVGAACHTGAYSCFFNEIYNPE.

Asp76 serves as a coordination point for Mg(2+). Cys77 provides a ligand contact to Zn(2+). Residues Asp78 and Asp80 each coordinate Mg(2+). Zn(2+)-binding residues include Cys93 and Cys100.

It belongs to the PRA-CH family. In terms of assembly, homodimer. Requires Mg(2+) as cofactor. Zn(2+) is required as a cofactor.

Its subcellular location is the cytoplasm. It carries out the reaction 1-(5-phospho-beta-D-ribosyl)-5'-AMP + H2O = 1-(5-phospho-beta-D-ribosyl)-5-[(5-phospho-beta-D-ribosylamino)methylideneamino]imidazole-4-carboxamide. Its pathway is amino-acid biosynthesis; L-histidine biosynthesis; L-histidine from 5-phospho-alpha-D-ribose 1-diphosphate: step 3/9. Its function is as follows. Catalyzes the hydrolysis of the adenine ring of phosphoribosyl-AMP. This Streptococcus mutans serotype c (strain ATCC 700610 / UA159) protein is Phosphoribosyl-AMP cyclohydrolase.